The sequence spans 493 residues: V-type proton ATPase subunit B (493 aa).

It belongs to the ATPase alpha/beta chains family. In terms of assembly, V-ATPase is a heteromultimeric enzyme composed of a peripheral catalytic V1 complex (main components: subunits A, B, C, D, E, and F) attached to an integral membrane V0 proton pore complex (main component: the proteolipid protein).

It localises to the cytoplasmic vesicle membrane. Its subcellular location is the endosome membrane. It is found in the contractile vacuole membrane. Functionally, vacuolar ATPase is responsible for acidifying a variety of intracellular compartments in eukaryotic cells. The B subunit is non-catalytic but combines with other subunits to form the catalytic complex. V-ATPase is responsible for energizing electrophoretic K(+)/2H(+) antiport by generating a transmembrane voltage of more than 200 mV. The chain is V-type proton ATPase subunit B (vatB) from Dictyostelium discoideum (Social amoeba).